Here is a 308-residue protein sequence, read N- to C-terminus: Ribosomal RNA small subunit methyltransferase H (308 aa).

S-adenosyl-L-methionine contacts are provided by residues 34–36, aspartate 54, phenylalanine 80, aspartate 101, and glutamine 108; that span reads GGH.

It belongs to the methyltransferase superfamily. RsmH family.

The protein localises to the cytoplasm. The enzyme catalyses cytidine(1402) in 16S rRNA + S-adenosyl-L-methionine = N(4)-methylcytidine(1402) in 16S rRNA + S-adenosyl-L-homocysteine + H(+). Functionally, specifically methylates the N4 position of cytidine in position 1402 (C1402) of 16S rRNA. The polypeptide is Ribosomal RNA small subunit methyltransferase H (Ureaplasma urealyticum serovar 10 (strain ATCC 33699 / Western)).